The sequence spans 273 residues: Oxidation resistance protein 1 (273 aa).

Met1 carries the N-acetylmethionine modification. Positions 18 to 33 (TDSSDSTAYTTASESS) are enriched in low complexity. Disordered stretches follow at residues 18–48 (TDSS…NKTT) and 177–197 (ISEK…GDKE). The segment covering 37–48 (KDSHNPFRNKTT) has biased composition (basic and acidic residues). Positions 74–273 (KLLTPEMCDE…IVALEVWRVG (200 aa)) constitute a TLDc domain. Ser178 is modified (phosphoserine).

The protein belongs to the OXR1 family.

Its subcellular location is the mitochondrion. Functionally, involved in protection from oxidative damage. This chain is Oxidation resistance protein 1 (OXR1), found in Saccharomyces cerevisiae (strain ATCC 204508 / S288c) (Baker's yeast).